Consider the following 370-residue polypeptide: UDP-3-O-acylglucosamine N-acyltransferase (370 aa).

Residue His252 is the Proton acceptor of the active site. The interval Asn348 to Val370 is disordered.

It belongs to the transferase hexapeptide repeat family. LpxD subfamily. Homotrimer.

The catalysed reaction is a UDP-3-O-[(3R)-3-hydroxyacyl]-alpha-D-glucosamine + a (3R)-hydroxyacyl-[ACP] = a UDP-2-N,3-O-bis[(3R)-3-hydroxyacyl]-alpha-D-glucosamine + holo-[ACP] + H(+). The protein operates within bacterial outer membrane biogenesis; LPS lipid A biosynthesis. Functionally, catalyzes the N-acylation of UDP-3-O-acylglucosamine using 3-hydroxyacyl-ACP as the acyl donor. Is involved in the biosynthesis of lipid A, a phosphorylated glycolipid that anchors the lipopolysaccharide to the outer membrane of the cell. This is UDP-3-O-acylglucosamine N-acyltransferase from Paraburkholderia phytofirmans (strain DSM 17436 / LMG 22146 / PsJN) (Burkholderia phytofirmans).